A 134-amino-acid chain; its full sequence is Small ribosomal subunit protein uS8c (134 aa).

The protein belongs to the universal ribosomal protein uS8 family. As to quaternary structure, part of the 30S ribosomal subunit.

The protein resides in the plastid. Its subcellular location is the chloroplast. Functionally, one of the primary rRNA binding proteins, it binds directly to 16S rRNA central domain where it helps coordinate assembly of the platform of the 30S subunit. This chain is Small ribosomal subunit protein uS8c (rps8), found in Cucumis sativus (Cucumber).